A 274-amino-acid chain; its full sequence is Large ribosomal subunit protein uL2 (274 aa).

The disordered stretch occupies residues 1-23; the sequence is MAIKIYRPTSPGRRHHSVSSFEE.

This sequence belongs to the universal ribosomal protein uL2 family. Part of the 50S ribosomal subunit. Forms a bridge to the 30S subunit in the 70S ribosome.

In terms of biological role, one of the primary rRNA binding proteins. Required for association of the 30S and 50S subunits to form the 70S ribosome, for tRNA binding and peptide bond formation. It has been suggested to have peptidyltransferase activity; this is somewhat controversial. Makes several contacts with the 16S rRNA in the 70S ribosome. This is Large ribosomal subunit protein uL2 from Dehalococcoides mccartyi (strain ATCC BAA-2100 / JCM 16839 / KCTC 5957 / BAV1).